The primary structure comprises 698 residues: Methionine synthase reductase (698 aa).

The region spanning 5–147 (LLLYATQQGQ…VVEPWIAGLW (143 aa)) is the Flavodoxin-like domain. 93–124 (LLGLGDSEYTYFCNGGKIIDKRLQELGARHFY) serves as a coordination point for FMN. The interval 166–247 (ALPVASPASS…ASLNIPGLPP (82 aa)) is hinge. Ser-171 and Ser-189 each carry phosphoserine. An FAD-binding FR-type domain is found at 271 to 533 (DPVFQVPISK…PRTTNSFHLP (263 aa)). Lys-291 contributes to the NADP(+) binding site. FAD contacts are provided by residues 451-454 (RPYS) and 487-490 (GVCT). NADP(+) contacts are provided by residues 610-611 (SR), 624-626 (YVQ), and Asp-659. Trp-697 serves as a coordination point for FAD.

In terms of assembly, forms a multiprotein complex with MMACHC, MMADHC and MTR. Requires FAD as cofactor. It depends on FMN as a cofactor. As to expression, found in all tissues tested, particularly abundant in skeletal muscle.

It localises to the cytoplasm. The catalysed reaction is 2 methylcob(III)alamin-[methionine synthase] + 2 S-adenosyl-L-homocysteine + NADP(+) + H(+) = 2 cob(II)alamin-[methionine synthase] + 2 S-adenosyl-L-methionine + NADPH. The enzyme catalyses 2 cob(II)alamin + A + 2 H2O + 2 H(+) = 2 aquacob(III)alamin + AH2. In terms of biological role, key enzyme in methionine and folate homeostasis responsible for the reactivation of methionine synthase (MTR/MS) activity by catalyzing the reductive methylation of MTR-bound cob(II)alamin. Cobalamin (vitamin B12) forms a complex with MTR to serve as an intermediary in methyl transfer reactions that cycles between MTR-bound methylcob(III)alamin and MTR bound-cob(I)alamin forms, and occasional oxidative escape of the cob(I)alamin intermediate during the catalytic cycle leads to the inactive cob(II)alamin species. The processing of cobalamin in the cytosol occurs in a multiprotein complex composed of at least MMACHC, MMADHC, MTRR and MTR which may contribute to shuttle safely and efficiently cobalamin towards MTR in order to produce methionine. Also necessary for the utilization of methyl groups from the folate cycle, thereby affecting transgenerational epigenetic inheritance. Also acts as a molecular chaperone for methionine synthase by stabilizing apoMTR and incorporating methylcob(III)alamin into apoMTR to form the holoenzyme. Also serves as an aquacob(III)alamin reductase by reducing aquacob(III)alamin to cob(II)alamin; this reduction leads to stimulation of the conversion of apoMTR and aquacob(III)alamin to MTR holoenzyme. The sequence is that of Methionine synthase reductase from Homo sapiens (Human).